A 140-amino-acid chain; its full sequence is Nucleoside diphosphate kinase (140 aa).

ATP contacts are provided by Lys11, Phe59, Arg87, Thr93, Arg104, and Asn114. His117 (pros-phosphohistidine intermediate) is an active-site residue.

It belongs to the NDK family. Homotetramer. Mg(2+) serves as cofactor.

Its subcellular location is the cytoplasm. It catalyses the reaction a 2'-deoxyribonucleoside 5'-diphosphate + ATP = a 2'-deoxyribonucleoside 5'-triphosphate + ADP. The catalysed reaction is a ribonucleoside 5'-diphosphate + ATP = a ribonucleoside 5'-triphosphate + ADP. Functionally, major role in the synthesis of nucleoside triphosphates other than ATP. The ATP gamma phosphate is transferred to the NDP beta phosphate via a ping-pong mechanism, using a phosphorylated active-site intermediate. The sequence is that of Nucleoside diphosphate kinase from Cereibacter sphaeroides (strain ATCC 17025 / ATH 2.4.3) (Rhodobacter sphaeroides).